We begin with the raw amino-acid sequence, 532 residues long: QDSASPIRNTHTGQVRGSLVHVEGTDAGVHTFLGIPFAKPPLGPLRFAPPEPAEAWSGVRDGTSLPAMCLQNLAIMDQDVLLLHFTPPSIPMSEDCLYLNIYSPAHAREGSDLPVMVWIHGGGLTMGMASMYDGSALAAFEDVVVVTIQYRLGVLGFFSTGDQHATGNHGYLDQVAALRWVQKNIAHFGGNPGRVTIFGESAGGTSVSSHVLSPMSQGLFHGAIMESLVALLPGLITSSSEVVSTVVANLSRCGQVDSETLVRCLRAKSEEEMLAITQVFMLIPGVVDGVFLPRHPEELLALADFQPVPSIIGINNDEYGWIIPKLLLAIDPQEERDRQAMREIMHQATKQLMLPPALGDLLMDEYMGSNEDPKHLMAQFQEMMADAMFVMPALRVAHLQRSHAPTYFYEFQHRPSFTKDLRPPHVRADHGDEVVFVFRSHLFGSKVPLTEEEELLSRRVMKYWANFARNRNPNGEGLAHWPLFDLDQRYLQLNMQPAVGQALKARRLQFWTHTLPQRVQELRGTEQKHTEL.

Gln1 bears the Pyrrolidone carboxylic acid mark. A disulfide bond links Cys69 and Cys96. Residue Ser201 is the Acyl-ester intermediate of the active site. The N-linked (GlcNAc...) asparagine glycan is linked to Asn249. A disulfide bridge links Cys253 with Cys264. Residues Glu318 and His430 each act as charge relay system in the active site. The short motif at 529–532 (HTEL) is the Prevents secretion from ER element.

The protein belongs to the type-B carboxylesterase/lipase family. As to quaternary structure, monomer.

It is found in the endoplasmic reticulum lumen. It carries out the reaction a carboxylic ester + H2O = an alcohol + a carboxylate + H(+). The catalysed reaction is cocaine + H2O = ecgonine methyl ester + benzoate + H(+). It catalyses the reaction 2-(5Z,8Z,11Z,14Z-eicosatetraenoyl)-glycerol + H2O = glycerol + (5Z,8Z,11Z,14Z)-eicosatetraenoate + H(+). The enzyme catalyses prostaglandin E2 1-glyceryl ester + H2O = prostaglandin E2 + glycerol + H(+). It carries out the reaction prostaglandin F2alpha 1-glyceryl ester + H2O = prostaglandin F2alpha + glycerol + H(+). Functionally, involved in the detoxification of xenobiotics and in the activation of ester and amide prodrugs. Converts monoacylglycerides to free fatty acids and glycerol. Hydrolyzes of 2-arachidonoylglycerol and prostaglandins. In Oryctolagus cuniculus (Rabbit), this protein is Cocaine esterase (CES2).